Consider the following 371-residue polypeptide: Carlactonoate CLA methyltransferase (371 aa).

Residue Tyr-21 coordinates S-adenosyl-L-homocysteine. Gln-28 contacts (11R)-carlactonoate. S-adenosyl-L-homocysteine-binding residues include Cys-62, Asn-67, Asp-101, Leu-102, Ser-141, and Phe-142. (11R)-carlactonoate is bound by residues His-162 and Trp-163. Residues Asn-180, Asp-266, Tyr-268, and Asp-269 each contribute to the Mg(2+) site.

This sequence belongs to the methyltransferase superfamily. Type-7 methyltransferase family. SABATH subfamily. In terms of assembly, homodimer. Requires Mg(2+) as cofactor.

The enzyme catalyses (11R)-carlactonoate + S-adenosyl-L-methionine = (11R)-methyl carlactonoate + S-adenosyl-L-homocysteine. Its function is as follows. Methyltransferase involved in the biosynthesis of strigolactone natural products, bioactive compounds promoting plant fitness and soil microbe interactions, but preventing shoot branching. Catalyzes the biosynthesis of (11R)-methyl carlactonoate (MeCLA) from (11R)-carlactonoate (CLA), downstream of MAX1; MeCLA is probably biologically active as a hormone regulating shoot branching and serves as a precursor of non-canonical strigolactones (SLs). The polypeptide is Carlactonoate CLA methyltransferase (Arabidopsis thaliana (Mouse-ear cress)).